A 1127-amino-acid polypeptide reads, in one-letter code: Caprin-2 (1127 aa).

Residues 67-108 (YQSPSGHSEEEREGNMKSAKPQVNHSQHGESQRALSPLQSTL) are disordered. Over residues 99-108 (RALSPLQSTL) the composition is skewed to polar residues. Coiled coils occupy residues 129 to 156 (LKHK…GEHL) and 194 to 216 (AQKK…KLRT). 3 disordered regions span residues 382–614 (NKQG…KDPV), 642–753 (DKPS…SSSV), and 922–975 (QCYK…PVDV). 2 stretches are compositionally biased toward basic and acidic residues: residues 402–432 (KRWD…HQEV) and 440–464 (EQRK…EISK). 2 stretches are compositionally biased toward polar residues: residues 512-531 (PKSW…SWTT) and 544-567 (TPKS…QISP). Positions 588 to 597 (LNTEPKDVPK) are enriched in basic and acidic residues. Polar residues-rich tracts occupy residues 665–714 (KEQN…TSET) and 741–753 (QGFQ…SSSV). Phosphoserine is present on residues Ser-948 and Ser-949. Over residues 956–970 (TFNSGDSGQGDSRSM) the composition is skewed to polar residues. The 135-residue stretch at 993–1127 (PQQMRVAFSA…TFSGYLLYQD (135 aa)) folds into the C1q domain. Residues Asp-1078 and Glu-1084 each coordinate Ca(2+).

Belongs to the caprin family. As to quaternary structure, homotrimer; via C1q domain. Found in a complex with LRP6, CCNY and CDK14 during G2/M stage; CAPRIN2 functions as a scaffold for the complex by binding to CCNY via its N terminus and to CDK14 via its C terminus. Interacts with LRP5. Interacts with LRP6. In terms of tissue distribution, detected in all tissues tested with highest levels of expression in brain and spleen.

The protein localises to the cytoplasm. It is found in the mitochondrion. It localises to the cell membrane. Functionally, promotes phosphorylation of the Wnt coreceptor LRP6, leading to increased activity of the canonical Wnt signaling pathway. Facilitates constitutive LRP6 phosphorylation by CDK14/CCNY during G2/M stage of the cell cycle, which may potentiate cells for Wnt signaling. May regulate the transport and translation of mRNAs, modulating for instance the expression of proteins involved in synaptic plasticity in neurons. Involved in regulation of growth as erythroblasts shift from a highly proliferative state towards their terminal phase of differentiation. May be involved in apoptosis. In Homo sapiens (Human), this protein is Caprin-2.